A 391-amino-acid polypeptide reads, in one-letter code: Argininosuccinate synthase (391 aa).

6–14 (AYSGGLDTT) serves as a coordination point for ATP. Tyr84 provides a ligand contact to L-citrulline. Residue Gly114 participates in ATP binding. L-aspartate is bound by residues Thr116, Asn120, and Asp121. An L-citrulline-binding site is contributed by Asn120. L-citrulline-binding residues include Arg124, Ser171, Ser180, Glu253, and Tyr265.

This sequence belongs to the argininosuccinate synthase family. Type 1 subfamily. Homotetramer.

It is found in the cytoplasm. It catalyses the reaction L-citrulline + L-aspartate + ATP = 2-(N(omega)-L-arginino)succinate + AMP + diphosphate + H(+). Its pathway is amino-acid biosynthesis; L-arginine biosynthesis; L-arginine from L-ornithine and carbamoyl phosphate: step 2/3. This is Argininosuccinate synthase from Saccharolobus solfataricus (strain ATCC 35092 / DSM 1617 / JCM 11322 / P2) (Sulfolobus solfataricus).